A 538-amino-acid polypeptide reads, in one-letter code: Chaperonin GroEL 1 (538 aa).

ATP contacts are provided by residues 30 to 33, Lys-51, 87 to 91, Gly-415, 479 to 481, and Asp-495; these read TLGP, DGTTT, and NAA.

The protein belongs to the chaperonin (HSP60) family. In terms of assembly, forms a cylinder of 14 subunits composed of two heptameric rings stacked back-to-back. Interacts with the co-chaperonin GroES.

The protein resides in the cytoplasm. It catalyses the reaction ATP + H2O + a folded polypeptide = ADP + phosphate + an unfolded polypeptide.. Its function is as follows. Together with its co-chaperonin GroES, plays an essential role in assisting protein folding. The GroEL-GroES system forms a nano-cage that allows encapsulation of the non-native substrate proteins and provides a physical environment optimized to promote and accelerate protein folding. The protein is Chaperonin GroEL 1 of Chromobacterium violaceum (strain ATCC 12472 / DSM 30191 / JCM 1249 / CCUG 213 / NBRC 12614 / NCIMB 9131 / NCTC 9757 / MK).